The sequence spans 375 residues: Zinc finger CCCH domain-containing protein 57 (375 aa).

5 C3H1-type zinc fingers span residues 42–70, 87–115, 133–161, 243–271, and 289–317; these read RHGE…HPHD, RIGQ…HPRN, RPNE…HPQT, RPGQ…HPRD, and RPGE…HPMR. The disordered stretch occupies residues 352–375; the sequence is SVEAKPTSLPETTSAKDTIVDAQH.

The protein localises to the nucleus. This chain is Zinc finger CCCH domain-containing protein 57 (ZFN3), found in Arabidopsis thaliana (Mouse-ear cress).